A 780-amino-acid polypeptide reads, in one-letter code: Pumilio domain-containing protein C4G8.03c (780 aa).

3 disordered regions span residues 1–29 (MVNR…LSSY), 298–330 (LSHF…LHSK), and 358–411 (NHHS…GKTV). The segment covering 298–307 (LSHFPDHLDP) has biased composition (basic and acidic residues). Positions 311–322 (PSPYQPSSLQPL) are enriched in low complexity. Residues 358–382 (NHHSSLSMDNDPTNVSTKNRNNQTV) show a composition bias toward polar residues. The region spanning 435–778 (EKSDDLSNLL…HILAKLTSST (344 aa)) is the PUM-HD domain. 9 Pumilio repeats span residues 462-497 (GFLG…LFFP), 498-533 (EIRQ…SMLN), 534-569 (GIGE…SLLL), 570-606 (KIII…PLFL), 607-642 (SMEE…RLVN), 643-678 (SIIK…RIIE), 679-714 (KFFG…QMLQ), 715-752 (EFLS…LILR), and 753-780 (SISH…STSS).

The chain is Pumilio domain-containing protein C4G8.03c from Schizosaccharomyces pombe (strain 972 / ATCC 24843) (Fission yeast).